The chain runs to 3108 residues: Probable polyketide synthase 39 (3108 aa).

The Ketosynthase family 3 (KS3) domain maps to 9 to 440; sequence DDDVAVIGIG…GSNVCLILSE (432 aa). Residues cysteine 181, histidine 320, and histidine 363 each act as for beta-ketoacyl synthase activity in the active site. An acyl/malonyl transferase region spans residues 643 to 676; sequence GVSADIIIGHSLGEISSAYCSGMIDFQTLCYLTY. The active-site For acyl/malonyl transferase activity is serine 653. The interval 939 to 1068 is N-terminal hotdog fold; that stretch reads HEKIKSEGPS…GNFSLFKHNI (130 aa). Residues 939 to 1265 form the PKS/mFAS DH domain; it reads HEKIKSEGPS…CTIAASNPDS (327 aa). Histidine 980 serves as the catalytic Proton acceptor; for dehydratase activity. Residues 1085–1265 form a C-terminal hotdog fold region; it reads NFTSISKQDL…CTIAASNPDS (181 aa). Aspartate 1157 (proton donor; for dehydratase activity) is an active-site residue. Positions 1375–1435 are disordered; it reads NNNNNNNNNN…NNNNNNNNNN (61 aa). The region spanning 2566–2643 is the Carrier domain; that stretch reads GNNEIIHSTI…QSIEIIKSAL (78 aa). Serine 2603 is modified (O-(pantetheine 4'-phosphoryl)serine). The helical transmembrane segment at 2702 to 2722 threads the bilayer; it reads IFLTGSTGFLGAYLLMELIKM.

Pantetheine 4'-phosphate serves as cofactor.

It is found in the membrane. In terms of biological role, probable polyketide synthase. This Dictyostelium discoideum (Social amoeba) protein is Probable polyketide synthase 39 (pks39).